A 109-amino-acid polypeptide reads, in one-letter code: MNTFLFPTLCLLGVWAALAGGVTVKDGEFSFSLESVKKLKDLQELQKPRNPRNLDGPIIPVLCNSPKFPEELKPICQKPNAEEILERLETIAQDPSTCEICAYAACAGC.

The N-terminal stretch at 1–21 (MNTFLFPTLCLLGVWAALAGG) is a signal peptide. The propeptide occupies 22 to 94 (VTVKDGEFSF…LERLETIAQD (73 aa)). Intrachain disulfides connect C63–C76, C98–C106, and C101–C109.

This sequence belongs to the guanylin family.

It is found in the secreted. Its function is as follows. Endogenous activator of intestinal guanylate cyclase. It stimulates this enzyme through the same receptor binding region as the heat-stable enterotoxins. The chain is Guanylin (GUCA2A) from Sus scrofa (Pig).